The chain runs to 595 residues: Elongation factor 4 (595 aa).

Residues 1–183 enclose the tr-type G domain; that stretch reads MNVRNFSIIA…AIVERIPPPP (183 aa). GTP contacts are provided by residues 13 to 18 and 130 to 133; these read DHGKST and NKID.

The protein belongs to the TRAFAC class translation factor GTPase superfamily. Classic translation factor GTPase family. LepA subfamily.

It is found in the cell membrane. It carries out the reaction GTP + H2O = GDP + phosphate + H(+). Its function is as follows. Required for accurate and efficient protein synthesis under certain stress conditions. May act as a fidelity factor of the translation reaction, by catalyzing a one-codon backward translocation of tRNAs on improperly translocated ribosomes. Back-translocation proceeds from a post-translocation (POST) complex to a pre-translocation (PRE) complex, thus giving elongation factor G a second chance to translocate the tRNAs correctly. Binds to ribosomes in a GTP-dependent manner. This chain is Elongation factor 4, found in Deinococcus geothermalis (strain DSM 11300 / CIP 105573 / AG-3a).